A 784-amino-acid chain; its full sequence is Endonuclease MutS2 (784 aa).

335 to 342 serves as a coordination point for ATP; the sequence is GPNTGGKT. Residues 527–546 are disordered; that stretch reads ERSKKQAEEDEARAHSAREE. One can recognise a Smr domain in the interval 709–784; that stretch reads LDLRGERYED…GTGVTVVELK (76 aa).

The protein belongs to the DNA mismatch repair MutS family. MutS2 subfamily. As to quaternary structure, homodimer. Binds to stalled ribosomes, contacting rRNA.

In terms of biological role, endonuclease that is involved in the suppression of homologous recombination and thus may have a key role in the control of bacterial genetic diversity. Its function is as follows. Acts as a ribosome collision sensor, splitting the ribosome into its 2 subunits. Detects stalled/collided 70S ribosomes which it binds and splits by an ATP-hydrolysis driven conformational change. Acts upstream of the ribosome quality control system (RQC), a ribosome-associated complex that mediates the extraction of incompletely synthesized nascent chains from stalled ribosomes and their subsequent degradation. Probably generates substrates for RQC. The sequence is that of Endonuclease MutS2 from Geobacillus thermodenitrificans (strain NG80-2).